A 390-amino-acid chain; its full sequence is Glutamate 5-kinase (390 aa).

Lysine 29 is an ATP binding site. 3 residues coordinate substrate: serine 69, aspartate 156, and asparagine 168. 188 to 189 (TD) contributes to the ATP binding site. A PUA domain is found at 295 to 374 (SGSLIVDAGA…EQFDRILGNN (80 aa)).

It belongs to the glutamate 5-kinase family.

The protein resides in the cytoplasm. It carries out the reaction L-glutamate + ATP = L-glutamyl 5-phosphate + ADP. Its pathway is amino-acid biosynthesis; L-proline biosynthesis; L-glutamate 5-semialdehyde from L-glutamate: step 1/2. Functionally, catalyzes the transfer of a phosphate group to glutamate to form L-glutamate 5-phosphate. The sequence is that of Glutamate 5-kinase from Psychrobacter arcticus (strain DSM 17307 / VKM B-2377 / 273-4).